The primary structure comprises 492 residues: Cobyric acid synthase (492 aa).

One can recognise a GATase cobBQ-type domain in the interval 252–440 (QLNVVVPVLT…LHGIFEQTEA (189 aa)). Residue Cys-333 is the Nucleophile of the active site. His-432 is an active-site residue.

It belongs to the CobB/CobQ family. CobQ subfamily.

It participates in cofactor biosynthesis; adenosylcobalamin biosynthesis. Functionally, catalyzes amidations at positions B, D, E, and G on adenosylcobyrinic A,C-diamide. NH(2) groups are provided by glutamine, and one molecule of ATP is hydrogenolyzed for each amidation. This chain is Cobyric acid synthase, found in Photobacterium profundum (strain SS9).